Consider the following 330-residue polypeptide: Beta-1,6-galactofuranosyltransferase WbbI (330 aa).

The protein resides in the cytoplasm. The protein operates within bacterial outer membrane biogenesis; lipopolysaccharide biosynthesis. Functionally, involved in the transfer of galactofuranose (Galf) onto an alpha-D-gluco-configured acceptor substrate to form a beta-1,6-linkage. It uses n-octyl alpha-D-glucopyranoside as an acceptor substrate for the addition of galactofuranose from the donor substrate UDP-galactofuranose. It is not able to use beta-D-glucopyranoside isomers. The chain is Beta-1,6-galactofuranosyltransferase WbbI (wbbI) from Escherichia coli (strain K12).